Here is a 630-residue protein sequence, read N- to C-terminus: Polyphenol oxidase A, chloroplastic (630 aa).

Positions 1–25 (MASLCSNSSSTSLKTPFTSSTTCLS) are disordered. Residues 1–87 (MASLCSNSSS…ANAIPLAASA (87 aa)) constitute a chloroplast transit peptide. Cystine bridges form between Cys-98/Cys-114 and Cys-113/Cys-181. Positions 180, 198, 207, 328, 332, and 370 each coordinate Cu cation. The segment at residues 184–198 (CNGGYSIDGKVLQVH) is a cross-link (2'-(S-cysteinyl)-histidine (Cys-His)).

Belongs to the tyrosinase family. It depends on Cu(2+) as a cofactor.

The protein localises to the plastid. It is found in the chloroplast thylakoid lumen. It catalyses the reaction 2 catechol + O2 = 2 1,2-benzoquinone + 2 H2O. Functionally, catalyzes the oxidation of mono- and o-diphenols to o-diquinones. This is Polyphenol oxidase A, chloroplastic from Solanum lycopersicum (Tomato).